Consider the following 98-residue polypeptide: MTAVEQTADGIRLRIMLQPKASKDAIIGLHDEELKISITAPPVDGAANAHLIKYLSKAFKVPKSAVQLEKGELNRHKQVFIPAPKIIPEAVRQLLDNP.

The protein belongs to the UPF0235 family.

In Actinobacillus succinogenes (strain ATCC 55618 / DSM 22257 / CCUG 43843 / 130Z), this protein is UPF0235 protein Asuc_1977.